The primary structure comprises 401 residues: Hemorrhagic metalloproteinase-disintegrin-like kaouthiagin (401 aa).

The Peptidase M12B domain occupies 14-208; sequence KYIEFYVIVD…DRPQCILNKP (195 aa). Residues Glu-17 and Asp-101 each coordinate Ca(2+). An N-linked (GlcNAc...) asparagine glycan is attached at Asn-112. 3 disulfide bridges follow: Cys-125-Cys-203, Cys-164-Cys-187, and Cys-166-Cys-171. His-149 provides a ligand contact to Zn(2+). Glu-150 is an active-site residue. Zn(2+)-binding residues include His-153 and His-159. Residues Cys-203, Asn-206, Ile-218, Asn-221, Phe-223, Glu-225, Glu-228, and Asp-231 each coordinate Ca(2+). In terms of domain architecture, Disintegrin spans 216–285; it reads PAICGNYFVE…ECPTDSLQRN (70 aa). Cystine bridges form between Cys-219-Cys-248, Cys-230-Cys-243, Cys-232-Cys-238, Cys-257-Cys-277, Cys-264-Cys-296, Cys-289-Cys-301, Cys-308-Cys-358, Cys-323-Cys-366, Cys-336-Cys-346, Cys-353-Cys-389, and Cys-383-Cys-394. A D/ECD-tripeptide motif is present at residues 263–265; sequence DCD. Residues Asp-265, Leu-266, Glu-268, and Asp-280 each coordinate Ca(2+).

It belongs to the venom metalloproteinase (M12B) family. P-III subfamily. P-IIIa sub-subfamily. As to quaternary structure, monomer. Zn(2+) serves as cofactor. As to expression, expressed by the venom gland.

It is found in the secreted. Functionally, snake venom zinc protease that inhibits hemostasis by binding and cleaving the vWF in humans. Also has and inhibitory effect on the collagen-induced platelet aggregation. The sequence is that of Hemorrhagic metalloproteinase-disintegrin-like kaouthiagin from Naja kaouthia (Monocled cobra).